A 387-amino-acid chain; its full sequence is 1-deoxy-D-xylulose 5-phosphate reductoisomerase (387 aa).

Thr11, Gly12, Ser13, Ile14, Gly37, Arg39, and Asn123 together coordinate NADPH. Lys124 is a binding site for 1-deoxy-D-xylulose 5-phosphate. Glu125 provides a ligand contact to NADPH. Asp147 contacts Mn(2+). 1-deoxy-D-xylulose 5-phosphate contacts are provided by Ser148, Glu149, Ser173, and His196. Glu149 is a Mn(2+) binding site. Residue Gly202 coordinates NADPH. 4 residues coordinate 1-deoxy-D-xylulose 5-phosphate: Ser209, Asn214, Lys215, and Glu218. A Mn(2+)-binding site is contributed by Glu218.

Belongs to the DXR family. The cofactor is Mg(2+). Mn(2+) is required as a cofactor.

It carries out the reaction 2-C-methyl-D-erythritol 4-phosphate + NADP(+) = 1-deoxy-D-xylulose 5-phosphate + NADPH + H(+). The protein operates within isoprenoid biosynthesis; isopentenyl diphosphate biosynthesis via DXP pathway; isopentenyl diphosphate from 1-deoxy-D-xylulose 5-phosphate: step 1/6. Functionally, catalyzes the NADPH-dependent rearrangement and reduction of 1-deoxy-D-xylulose-5-phosphate (DXP) to 2-C-methyl-D-erythritol 4-phosphate (MEP). In Corynebacterium diphtheriae (strain ATCC 700971 / NCTC 13129 / Biotype gravis), this protein is 1-deoxy-D-xylulose 5-phosphate reductoisomerase.